We begin with the raw amino-acid sequence, 345 residues long: S-adenosylmethionine:tRNA ribosyltransferase-isomerase (345 aa).

It belongs to the QueA family. In terms of assembly, monomer.

The protein resides in the cytoplasm. The catalysed reaction is 7-aminomethyl-7-carbaguanosine(34) in tRNA + S-adenosyl-L-methionine = epoxyqueuosine(34) in tRNA + adenine + L-methionine + 2 H(+). It participates in tRNA modification; tRNA-queuosine biosynthesis. Functionally, transfers and isomerizes the ribose moiety from AdoMet to the 7-aminomethyl group of 7-deazaguanine (preQ1-tRNA) to give epoxyqueuosine (oQ-tRNA). This is S-adenosylmethionine:tRNA ribosyltransferase-isomerase from Acinetobacter baumannii (strain AB0057).